The following is an 81-amino-acid chain: Photosystem I iron-sulfur center (81 aa).

4Fe-4S ferredoxin-type domains are found at residues 2-31 and 39-68; these read AHSV…MIPW and IASA…VRVY. Residues Cys-11, Cys-14, Cys-17, Cys-21, Cys-48, Cys-51, Cys-54, and Cys-58 each contribute to the [4Fe-4S] cluster site.

As to quaternary structure, the eukaryotic PSI reaction center is composed of at least 11 subunits. [4Fe-4S] cluster is required as a cofactor.

It localises to the plastid. Its subcellular location is the chloroplast thylakoid membrane. The catalysed reaction is reduced [plastocyanin] + hnu + oxidized [2Fe-2S]-[ferredoxin] = oxidized [plastocyanin] + reduced [2Fe-2S]-[ferredoxin]. Its function is as follows. Apoprotein for the two 4Fe-4S centers FA and FB of photosystem I (PSI); essential for photochemical activity. FB is the terminal electron acceptor of PSI, donating electrons to ferredoxin. The C-terminus interacts with PsaA/B/D and helps assemble the protein into the PSI complex. Required for binding of PsaD and PsaE to PSI. PSI is a plastocyanin-ferredoxin oxidoreductase, converting photonic excitation into a charge separation, which transfers an electron from the donor P700 chlorophyll pair to the spectroscopically characterized acceptors A0, A1, FX, FA and FB in turn. This chain is Photosystem I iron-sulfur center, found in Staurastrum punctulatum (Green alga).